Consider the following 205-residue polypeptide: Arginine exporter protein ArgO (205 aa).

Helical transmembrane passes span Met1–Pro21, Leu42–Leu62, Leu67–Ala87, Ile111–Val131, Trp147–Ala167, and Leu185–Leu205.

This sequence belongs to the LysE/ArgO transporter (TC 2.A.75) family.

It is found in the cell inner membrane. It carries out the reaction L-arginine(in) = L-arginine(out). Involved in the export of arginine. Important to control the intracellular level of arginine and the correct balance between arginine and lysine. This chain is Arginine exporter protein ArgO, found in Yersinia pseudotuberculosis serotype IB (strain PB1/+).